A 219-amino-acid polypeptide reads, in one-letter code: Lipid transferase CIDEB (219 aa).

One can recognise a CIDE-N domain in the interval 33 to 110 (PRQRPFRVCD…VLELGQSWSP (78 aa)).

The protein belongs to the CIDE family. Interacts with DFFA. Interacts with DFFB; inhibited by DFFB. Interacts with APOB. Interacts with PREB/SEC12; facilitating loading of SCAP-SREBP into COPII vesicles.

Its subcellular location is the lipid droplet. The protein localises to the endoplasmic reticulum membrane. It is found in the golgi apparatus. It localises to the cytoplasmic vesicle. The protein resides in the COPI-coated vesicle. Lipid transferase specifically expressed in hepatocytes, which promotes unilocular lipid droplet formation by mediating lipid droplet fusion. Lipid droplet fusion promotes their enlargement, restricting lipolysis and favoring lipid storage. Localizes on the lipid droplet surface, at focal contact sites between lipid droplets, and mediates atypical lipid droplet fusion by promoting directional net neutral lipid transfer from the smaller to larger lipid droplets. The transfer direction may be driven by the internal pressure difference between the contacting lipid droplet pair. Promotes lipid exchange and lipid droplet fusion in both small and large lipid droplet-containing hepatocytes. In addition to its role in lipid droplet fusion, also involved in cytoplasmic vesicle biogenesis and transport. Required for very-low-density lipoprotein (VLDL) lipidation and maturation. Probably involved in the biogenesis of VLDL transport vesicles by forming a COPII vesicle coat and facilitating the formation of endoplasmic reticulum-derived large vesicles. Also involved in sterol-regulated export of the SCAP-SREBP complex, composed of SCAP, SREBF1/SREBP1 and SREBF2/SREBP2, by promoting loading of SCAP-SREBP into COPII vesicles. May also activate apoptosis. This is Lipid transferase CIDEB (CIDEB) from Bos taurus (Bovine).